The chain runs to 284 residues: Co-chaperone protein DjlA (284 aa).

The Periplasmic segment spans residues 1-6 (MHIFGK). A helical transmembrane segment spans residues 7-30 (ILGAFFGFLFGGPFGAIFGIFLGH). Topologically, residues 31 to 284 (QFDKARRLNQ…ELIRKEKGIK (254 aa)) are cytoplasmic. Residues 190–211 (QGGGFGGSQQQSHSGQQWQQPS) form a disordered region. Low complexity predominate over residues 197–211 (SQQQSHSGQQWQQPS). A J domain is found at 218 to 284 (DAYEVLGVSE…ELIRKEKGIK (67 aa)).

In terms of assembly, homodimer.

It localises to the cell inner membrane. Regulatory DnaK co-chaperone. Direct interaction between DnaK and DjlA is needed for the induction of the wcaABCDE operon, involved in the synthesis of a colanic acid polysaccharide capsule, possibly through activation of the RcsB/RcsC phosphotransfer signaling pathway. The colanic acid capsule may help the bacterium survive conditions outside the host. This Vibrio cholerae serotype O1 (strain ATCC 39315 / El Tor Inaba N16961) protein is Co-chaperone protein DjlA.